A 339-amino-acid chain; its full sequence is DNA-directed RNA polymerase subunit alpha (339 aa).

The alpha N-terminal domain (alpha-NTD) stretch occupies residues 1–233 (MVREEVAGST…DLFLPFLHAE (233 aa)). Positions 264 to 339 (KKGIPLNCIF…IDLLKNKLSF (76 aa)) are alpha C-terminal domain (alpha-CTD).

This sequence belongs to the RNA polymerase alpha chain family. In terms of assembly, in plastids the minimal PEP RNA polymerase catalytic core is composed of four subunits: alpha, beta, beta', and beta''. When a (nuclear-encoded) sigma factor is associated with the core the holoenzyme is formed, which can initiate transcription.

It is found in the plastid. It localises to the chloroplast. The enzyme catalyses RNA(n) + a ribonucleoside 5'-triphosphate = RNA(n+1) + diphosphate. DNA-dependent RNA polymerase catalyzes the transcription of DNA into RNA using the four ribonucleoside triphosphates as substrates. The chain is DNA-directed RNA polymerase subunit alpha from Eremopyrum distans.